A 1320-amino-acid polypeptide reads, in one-letter code: Mediator of RNA polymerase II transcription subunit 15 (1320 aa).

Polar residues predominate over residues 235–244 (QQASLNQLTP). Disordered stretches follow at residues 235–283 (QQAS…KPQQ), 372–398 (KNMMAQQSAAALQQGQQQPRQMGPQQA), 540–688 (QLQQ…QQQT), 702–791 (QTQQ…PTEQ), and 1233–1270 (DSSSAEPPTEQVNKKRSHDSLEISPAESDSSLLNDSKK). Composition is skewed to low complexity over residues 245 to 283 (QQRAQLQQRQQSTQQSQSAPPQAPQVAQSQQVPAQKPQQ), 375 to 398 (MAQQSAAALQQGQQQPRQMGPQQA), and 540 to 554 (QLQQTQEQDPQHTQL). The segment covering 555 to 587 (ADSFSQRQFTSPTLAKPSANVSTIAQQQTQPTA) has biased composition (polar residues). Composition is skewed to low complexity over residues 588–624 (LSQSHPQQQQGSQAQQQLLQQQQGSQAQQQLLQQQQQ), 634–688 (QQQT…QQQT), and 702–780 (QTQQ…PQQT).

Belongs to the Mediator complex subunit 15 family. In terms of assembly, component of the Mediator complex.

The protein localises to the nucleus. In terms of biological role, component of the Mediator complex, a coactivator involved in regulated gene transcription of nearly all RNA polymerase II-dependent genes. Mediator functions as a bridge to convey information from gene-specific regulatory proteins to the basal RNA polymerase II transcription machinery. Mediator is recruited to promoters by direct interactions with regulatory proteins and serves as a scaffold for the assembly of a functional preinitiation complex with RNA polymerase II and the general transcription factors. In Eremothecium gossypii (strain ATCC 10895 / CBS 109.51 / FGSC 9923 / NRRL Y-1056) (Yeast), this protein is Mediator of RNA polymerase II transcription subunit 15 (GAL11).